Consider the following 94-residue polypeptide: Selenoprotein K (94 aa).

Residues 20-42 traverse the membrane as a helical segment; sequence LSFLTDFFWGAVEFIGLFFQTLV. Residues 48–94 are disordered; it reads KDGNNSASSRFSDGRGPPGFPGRRRMGRINHGAGPTPPPMGGGGUGR. The segment covering 49–58 has biased composition (polar residues); the sequence is DGNNSASSRF. Position 92 (Sec92) is a non-standard amino acid, selenocysteine.

Belongs to the selenoprotein K family.

Its subcellular location is the endoplasmic reticulum membrane. It is found in the cell membrane. Functionally, required for Ca(2+) flux in immune cells and plays a role in T-cell proliferation and in T-cell and neutrophil migration. Involved in endoplasmic reticulum-associated degradation (ERAD) of soluble glycosylated proteins. Required for cell surface expression of CD36 and involved in macrophage uptake of low-density lipoprotein and in foam cell formation. Required for palmitoylation. The sequence is that of Selenoprotein K (selenok) from Danio rerio (Zebrafish).